Here is a 503-residue protein sequence, read N- to C-terminus: Maturase K (503 aa).

This sequence belongs to the intron maturase 2 family. MatK subfamily.

It is found in the plastid. The protein localises to the chloroplast. In terms of biological role, usually encoded in the trnK tRNA gene intron. Probably assists in splicing its own and other chloroplast group II introns. The polypeptide is Maturase K (Rhamnus cathartica (Common buckthorn)).